Consider the following 70-residue polypeptide: Large ribosomal subunit protein uL29 (70 aa).

It belongs to the universal ribosomal protein uL29 family.

The protein is Large ribosomal subunit protein uL29 of Prochlorococcus marinus (strain NATL1A).